The primary structure comprises 162 residues: 2-C-methyl-D-erythritol 2,4-cyclodiphosphate synthase (162 aa).

Residues Asp-9 and His-11 each coordinate a divalent metal cation. 4-CDP-2-C-methyl-D-erythritol 2-phosphate contacts are provided by residues 9–11 and 37–38; these read DVH and HS. His-45 provides a ligand contact to a divalent metal cation.

Belongs to the IspF family. In terms of assembly, homotrimer. The cofactor is a divalent metal cation.

The enzyme catalyses 4-CDP-2-C-methyl-D-erythritol 2-phosphate = 2-C-methyl-D-erythritol 2,4-cyclic diphosphate + CMP. Its pathway is isoprenoid biosynthesis; isopentenyl diphosphate biosynthesis via DXP pathway; isopentenyl diphosphate from 1-deoxy-D-xylulose 5-phosphate: step 4/6. Its function is as follows. Involved in the biosynthesis of isopentenyl diphosphate (IPP) and dimethylallyl diphosphate (DMAPP), two major building blocks of isoprenoid compounds. Catalyzes the conversion of 4-diphosphocytidyl-2-C-methyl-D-erythritol 2-phosphate (CDP-ME2P) to 2-C-methyl-D-erythritol 2,4-cyclodiphosphate (ME-CPP) with a corresponding release of cytidine 5-monophosphate (CMP). The protein is 2-C-methyl-D-erythritol 2,4-cyclodiphosphate synthase of Petrotoga mobilis (strain DSM 10674 / SJ95).